The sequence spans 162 residues: SsrA-binding protein (162 aa).

The protein belongs to the SmpB family.

Its subcellular location is the cytoplasm. Functionally, required for rescue of stalled ribosomes mediated by trans-translation. Binds to transfer-messenger RNA (tmRNA), required for stable association of tmRNA with ribosomes. tmRNA and SmpB together mimic tRNA shape, replacing the anticodon stem-loop with SmpB. tmRNA is encoded by the ssrA gene; the 2 termini fold to resemble tRNA(Ala) and it encodes a 'tag peptide', a short internal open reading frame. During trans-translation Ala-aminoacylated tmRNA acts like a tRNA, entering the A-site of stalled ribosomes, displacing the stalled mRNA. The ribosome then switches to translate the ORF on the tmRNA; the nascent peptide is terminated with the 'tag peptide' encoded by the tmRNA and targeted for degradation. The ribosome is freed to recommence translation, which seems to be the essential function of trans-translation. The polypeptide is SsrA-binding protein (Granulibacter bethesdensis (strain ATCC BAA-1260 / CGDNIH1)).